The sequence spans 479 residues: Cardiolipin synthase A (479 aa).

Transmembrane regions (helical) follow at residues 8-28 (IFGYLIALLHFLGLIAAIHAV) and 38-58 (IAWALSLLFMPYLTLIPYLVF). PLD phosphodiesterase domains are found at residues 218–245 (VNFRNHRKIVVVDGMLGFVGGHNVGDEY) and 392–419 (QPGFLHQKVVLIDNEISAIGSANLDNRS). Residues His223, Lys225, Asp230, His397, Lys399, and Asp404 contribute to the active site.

It belongs to the phospholipase D family. Cardiolipin synthase subfamily. ClsA sub-subfamily.

It localises to the cell inner membrane. The catalysed reaction is 2 a 1,2-diacyl-sn-glycero-3-phospho-(1'-sn-glycerol) = a cardiolipin + glycerol. Functionally, catalyzes the reversible phosphatidyl group transfer from one phosphatidylglycerol molecule to another to form cardiolipin (CL) (diphosphatidylglycerol) and glycerol. This Pseudomonas fluorescens (strain ATCC BAA-477 / NRRL B-23932 / Pf-5) protein is Cardiolipin synthase A.